An 870-amino-acid polypeptide reads, in one-letter code: DNA topoisomerase 1 (870 aa).

Residues 1-128 form the Toprim domain; it reads MKSPRFRHSQ…RVYKSSFEAA (128 aa). The region spanning 143–578 is the Topo IA-type catalytic domain; it reads YDGLAYSAKA…QTNAFVQKIT (436 aa). The segment at 180–185 is interaction with DNA; it reads SSGRVQ. The O-(5'-phospho-DNA)-tyrosine intermediate role is filled by tyrosine 299. C4-type zinc fingers lie at residues 603-627, 693-717, and 784-807; these read CQCP…HPNC, CPKC…QNGC, and CPLC…KRGC.

It belongs to the type IA topoisomerase family. In terms of assembly, monomer.

The enzyme catalyses ATP-independent breakage of single-stranded DNA, followed by passage and rejoining.. Its function is as follows. Releases the supercoiling and torsional tension of DNA, which is introduced during the DNA replication and transcription, by transiently cleaving and rejoining one strand of the DNA duplex. Introduces a single-strand break via transesterification at a target site in duplex DNA. The scissile phosphodiester is attacked by the catalytic tyrosine of the enzyme, resulting in the formation of a DNA-(5'-phosphotyrosyl)-enzyme intermediate and the expulsion of a 3'-OH DNA strand. The free DNA strand then undergoes passage around the unbroken strand, thus removing DNA supercoils. Finally, in the religation step, the DNA 3'-OH attacks the covalent intermediate to expel the active-site tyrosine and restore the DNA phosphodiester backbone. In Bacillus anthracis, this protein is DNA topoisomerase 1 (topX).